A 52-amino-acid chain; its full sequence is Eukaryotic translation initiation factor 2 subunit 1 (52 aa).

An S1 motif domain is found at 16-52 (EDVVMVNVRSIAEMGAYVSLLEYNNIEGRILLSELSR). Phosphoserine; by HRI is present on Ser-48. Residue Ser-51 is modified to Phosphoserine.

The protein belongs to the eIF-2-alpha family. In terms of assembly, eukaryotic translation initiation factor 2 eIF2 is a heterotrimeric complex composed of an alpha (EIF2S1), a beta (EIF2S2) and a gamma (EIF2S3) chain. eIF2 is member of the 43S pre-initiation complex (43S PIC). eIF2 forms a complex with at least CELF1/CUGBP1, CALR, CALR3, EIF2S1, EIF2S2, HSP90B1 and HSPA5. Interaction with METAP2 protects EIF2S1 from inhibitory phosphorylation. Interacts with ABCF1. Associates with ribosomes. Interacts with DDX3X in an RNA-independent manner. Post-translationally, phosphorylation at Ser-48 and Ser-51 stabilizes the eIF-2/GDP/eIF2B complex and prevents GDP/GTP exchange reaction, thus impairing the recycling of eIF-2 between successive rounds of initiation and leading to global inhibition of translation, while concomitantly initiating the preferential translation of integrated stress response (ISR)-specific mRNAs. Substrate for at least 4 kinases: EIF2AK1/HRI, EIF2AK2/PKR, EIF2AK3/PERK and EIF2AK4/GCN2. Phosphorylation on Ser-51 by the EIF2AK4/GCN2 protein kinase occurs in response to amino acid starvation and UV irradiation. Phosphorylation at Ser-51 by the EIF2AK3/PERK protein kinase occurs in response to the unfolded protein response. Phosphorylation at Ser-51 by EIF2AK1/HRI in response to mitochondrial damage promotes relocalization to the mitochondrial surface.

The protein localises to the cytoplasm. The protein resides in the stress granule. Its subcellular location is the cytosol. It localises to the mitochondrion. Activity is regulated by phosphorylation at Ser-49 and Ser-52, which stabilizes the eIF2/GDP/eIF2B complex and prevents the eIF2B-mediated exchange of GDP for GTP, thereby preventing the formation of the 43S pre-initiation complex (43S PIC). This results in the global attenuation of 5' cap-dependent protein synthesis and concomitant translation of ISR-specific mRNAs that contain a short upstream open reading frame (uORF) in their 5' UTR, such as ATF4, ATF5, DDIT3/CHOP and PPP1R15A/GADD34. In terms of biological role, member of the eIF2 complex that functions in the early steps of protein synthesis by forming a ternary complex with GTP and initiator tRNA. This complex binds to a 40S ribosomal subunit, followed by mRNA binding to form a 43S pre-initiation complex. Junction of the 60S ribosomal subunit to form the 80S initiation complex is preceded by hydrolysis of the GTP bound to eIF2 and release of an eIF2-GDP binary complex. In order for eIF2 to recycle and catalyze another round of initiation, the GDP bound to eIF2 must exchange with GTP by way of a reaction catalyzed by eIF2B. EIF2S1/eIF2-alpha is a key component of the integrated stress response (ISR), required for adaptation to various stress: phosphorylation by metabolic-stress sensing protein kinases (EIF2AK1/HRI, EIF2AK2/PKR, EIF2AK3/PERK and EIF2AK4/GCN2) in response to stress converts EIF2S1/eIF2-alpha in a global protein synthesis inhibitor, leading to a attenuation of cap-dependent translation, while concomitantly initiating the preferential translation of ISR-specific mRNAs, such as the transcriptional activators ATF4 and QRICH1, and hence allowing ATF4- and QRICH1-mediated reprogramming. EIF2S1/eIF2-alpha also acts as an activator of mitophagy in response to mitochondrial damage: phosphorylation by EIF2AK1/HRI promotes relocalization to the mitochondrial surface, thereby triggering PRKN-independent mitophagy. In Oryctolagus cuniculus (Rabbit), this protein is Eukaryotic translation initiation factor 2 subunit 1 (EIF2S1).